A 145-amino-acid polypeptide reads, in one-letter code: D-aminoacyl-tRNA deacylase (145 aa).

Residues 137 to 138 (GP) carry the Gly-cisPro motif, important for rejection of L-amino acids motif.

The protein belongs to the DTD family. Homodimer.

The protein resides in the cytoplasm. It carries out the reaction glycyl-tRNA(Ala) + H2O = tRNA(Ala) + glycine + H(+). The catalysed reaction is a D-aminoacyl-tRNA + H2O = a tRNA + a D-alpha-amino acid + H(+). An aminoacyl-tRNA editing enzyme that deacylates mischarged D-aminoacyl-tRNAs. Also deacylates mischarged glycyl-tRNA(Ala), protecting cells against glycine mischarging by AlaRS. Acts via tRNA-based rather than protein-based catalysis; rejects L-amino acids rather than detecting D-amino acids in the active site. By recycling D-aminoacyl-tRNA to D-amino acids and free tRNA molecules, this enzyme counteracts the toxicity associated with the formation of D-aminoacyl-tRNA entities in vivo and helps enforce protein L-homochirality. In Lactobacillus helveticus (strain DPC 4571), this protein is D-aminoacyl-tRNA deacylase.